A 439-amino-acid chain; its full sequence is tRNA modification GTPase MnmE (439 aa).

(6S)-5-formyl-5,6,7,8-tetrahydrofolate is bound by residues arginine 20, glutamate 78, and lysine 116. Residues 211-364 (GIYVAILGEP…LLSAIQKKVE (154 aa)) enclose the TrmE-type G domain. Residues 221–226 (NSGKST), 240–246 (SEYAGTT), and 265–268 (DTAG) contribute to the GTP site. Mg(2+)-binding residues include serine 225 and threonine 246. Lysine 439 contacts (6S)-5-formyl-5,6,7,8-tetrahydrofolate.

Belongs to the TRAFAC class TrmE-Era-EngA-EngB-Septin-like GTPase superfamily. TrmE GTPase family. In terms of assembly, homodimer. Heterotetramer of two MnmE and two MnmG subunits. The cofactor is K(+).

It is found in the cytoplasm. Its function is as follows. Exhibits a very high intrinsic GTPase hydrolysis rate. Involved in the addition of a carboxymethylaminomethyl (cmnm) group at the wobble position (U34) of certain tRNAs, forming tRNA-cmnm(5)s(2)U34. This is tRNA modification GTPase MnmE from Ehrlichia ruminantium (strain Gardel).